A 598-amino-acid polypeptide reads, in one-letter code: Elongation factor 4 (598 aa).

A tr-type G domain is found at 2–184 (DHIRNFSIIA…AIVKRVPPPR (183 aa)). GTP contacts are provided by residues 14–19 (DHGKST) and 131–134 (NKID).

It belongs to the TRAFAC class translation factor GTPase superfamily. Classic translation factor GTPase family. LepA subfamily.

Its subcellular location is the cell inner membrane. The enzyme catalyses GTP + H2O = GDP + phosphate + H(+). Its function is as follows. Required for accurate and efficient protein synthesis under certain stress conditions. May act as a fidelity factor of the translation reaction, by catalyzing a one-codon backward translocation of tRNAs on improperly translocated ribosomes. Back-translocation proceeds from a post-translocation (POST) complex to a pre-translocation (PRE) complex, thus giving elongation factor G a second chance to translocate the tRNAs correctly. Binds to ribosomes in a GTP-dependent manner. The protein is Elongation factor 4 of Syntrophus aciditrophicus (strain SB).